The primary structure comprises 184 residues: Protein GrpE (184 aa).

Over residues 1-10 (MTDTPPENEE) the composition is skewed to acidic residues. The tract at residues 1 to 22 (MTDTPPENEEQHESNVQNENEV) is disordered.

Belongs to the GrpE family. In terms of assembly, homodimer.

The protein resides in the cytoplasm. Functionally, participates actively in the response to hyperosmotic and heat shock by preventing the aggregation of stress-denatured proteins, in association with DnaK and GrpE. It is the nucleotide exchange factor for DnaK and may function as a thermosensor. Unfolded proteins bind initially to DnaJ; upon interaction with the DnaJ-bound protein, DnaK hydrolyzes its bound ATP, resulting in the formation of a stable complex. GrpE releases ADP from DnaK; ATP binding to DnaK triggers the release of the substrate protein, thus completing the reaction cycle. Several rounds of ATP-dependent interactions between DnaJ, DnaK and GrpE are required for fully efficient folding. This chain is Protein GrpE, found in Chlamydia pneumoniae (Chlamydophila pneumoniae).